We begin with the raw amino-acid sequence, 240 residues long: LexA repressor (240 aa).

Residues F26–T46 constitute a DNA-binding region (H-T-H motif). Active-site for autocatalytic cleavage activity residues include S161 and K199.

It belongs to the peptidase S24 family. As to quaternary structure, homodimer.

It catalyses the reaction Hydrolysis of Ala-|-Gly bond in repressor LexA.. Its function is as follows. Represses a number of genes involved in the response to DNA damage (SOS response), including recA and lexA. In the presence of single-stranded DNA, RecA interacts with LexA causing an autocatalytic cleavage which disrupts the DNA-binding part of LexA, leading to derepression of the SOS regulon and eventually DNA repair. This Brucella ovis (strain ATCC 25840 / 63/290 / NCTC 10512) protein is LexA repressor.